Reading from the N-terminus, the 653-residue chain is UvrABC system protein C (653 aa).

In terms of domain architecture, GIY-YIG spans 44 to 122; sequence NAPGVYRMVN…IKRLRPRFNV (79 aa). In terms of domain architecture, UVR spans 232 to 267; sequence STVKAEIATAMQEASQALDFERAAIYRDRLAALSHV.

Belongs to the UvrC family. Interacts with UvrB in an incision complex.

Its subcellular location is the cytoplasm. The UvrABC repair system catalyzes the recognition and processing of DNA lesions. UvrC both incises the 5' and 3' sides of the lesion. The N-terminal half is responsible for the 3' incision and the C-terminal half is responsible for the 5' incision. This Chelativorans sp. (strain BNC1) protein is UvrABC system protein C.